Here is a 376-residue protein sequence, read N- to C-terminus: MGLLAFLKTQFVLHPLVGFVFVVSGLVINFVQLCTLALWPVSKQLYRRLNCRLAYSLWSQLVMLLEWWSCTECTLFTDQATVERFGKEHAVIILNHNFEIDFLCGWTMCERFGVLGSSKVLAKKELLYVPLIGWTWYFLEIVFCKRKWEEDRDTVVEGLRRLSDYPEYMWFLLYCEGTRFTETKHRVSMEVAAAKGLPVLKYHLLPRTKGFTTAVKCLRGTVAAVYDVTLNFRGNKNPSLLGILYGKKYEADMCVRRFPLEDIPLDEKEAAQWLHKLYQEKDALQEIYNQKGMFPGEQFKPARRPWTLLNFLSWATILLSPLFSFVLGVFASGSPLLILTFLGFVGAASFGVRRLIGVTEIEKGSSYGNQEFKKKE.

Residues 1–124 (MGLLAFLKTQ…LGSSKVLAKK (124 aa)) are Cytoplasmic-facing. Residues 96-101 (HNFEID) carry the HXXXXD motif motif. The chain crosses the membrane as a helical span at residues 125–145 (ELLYVPLIGWTWYFLEIVFCK). Over 146–316 (RKWEEDRDTV…TLLNFLSWAT (171 aa)) the chain is Lumenal. A helical transmembrane segment spans residues 317-339 (ILLSPLFSFVLGVFASGSPLLIL). Over 340–376 (TFLGFVGAASFGVRRLIGVTEIEKGSSYGNQEFKKKE) the chain is Cytoplasmic.

The protein belongs to the 1-acyl-sn-glycerol-3-phosphate acyltransferase family.

It localises to the endoplasmic reticulum membrane. The protein resides in the nucleus envelope. It catalyses the reaction a 1-acyl-sn-glycero-3-phosphate + an acyl-CoA = a 1,2-diacyl-sn-glycero-3-phosphate + CoA. The catalysed reaction is pentadecanoyl-CoA + 1-(9Z-octadecenoyl)-sn-glycero-3-phosphate = 1-(9Z)-octadecenoyl-2-pentadecanoyl-sn-glycero-3-phosphate + CoA. The enzyme catalyses heptadecanoyl-CoA + 1-(9Z-octadecenoyl)-sn-glycero-3-phosphate = 1-(9Z)-octadecenoyl-2-heptadecanoyl-sn-glycero-3-phosphate + CoA. It carries out the reaction 1-(9Z-octadecenoyl)-sn-glycero-3-phosphate + octadecanoyl-CoA = 1-(9Z-octadecenoyl)-2-octadecanoyl-sn-glycero-3-phosphate + CoA. It catalyses the reaction nonadecanoyl-CoA + 1-(9Z-octadecenoyl)-sn-glycero-3-phosphate = 1-(9Z)-octadecenoyl-2-nonadecanoyl-sn-glycero-3-phosphate + CoA. The catalysed reaction is 1-(9Z-octadecenoyl)-sn-glycero-3-phosphate + (5Z,8Z,11Z,14Z)-eicosatetraenoyl-CoA = 1-(9Z)-octadecenoyl-2-(5Z,8Z,11Z,14Z)-eicosatetraenoyl-sn-glycero-3-phosphate + CoA. The enzyme catalyses 1-(9Z-octadecenoyl)-sn-glycero-3-phosphate + (9Z)-octadecenoyl-CoA = 1,2-di-(9Z-octadecenoyl)-sn-glycero-3-phosphate + CoA. It carries out the reaction 1-(9Z-octadecenoyl)-sn-glycero-3-phosphate + (9Z,12Z)-octadecadienoyl-CoA = 1-(9Z)-octadecenoyl-2-(9Z,12Z)-octadecadienoyl-sn-glycero-3-phosphate + CoA. It catalyses the reaction 1-(9Z-octadecenoyl)-sn-glycero-3-phosphocholine + (5Z,8Z,11Z,14Z)-eicosatetraenoyl-CoA = 1-(9Z)-octadecenoyl-2-(5Z,8Z,11Z,14Z)-icosatetraenoyl-sn-glycero-3-phosphocholine + CoA. The catalysed reaction is 1-(9Z-octadecenoyl)-sn-glycero-3-phospho-(1D-myo-inositol) + (5Z,8Z,11Z,14Z)-eicosatetraenoyl-CoA = 1-(9Z-octadecenoyl)-2-(5Z,8Z,11Z,14Z-eicosatetraenoyl)-sn-glycero-3-phospho-1D-myo-inositol + CoA. The enzyme catalyses 1-(9Z-octadecenoyl)-sn-glycero-3-phospho-L-serine + (5Z,8Z,11Z,14Z)-eicosatetraenoyl-CoA = 1-(9Z-octadecenoyl)-2-(5Z,8Z,11Z,14Z-eicosatetraenoyl)-sn-glycero-3-phospho-L-serine + CoA. It carries out the reaction 1-hexadecanoyl-sn-glycero-3-phosphate + (9Z)-octadecenoyl-CoA = 1-hexadecanoyl-2-(9Z-octadecenoyl)-sn-glycero-3-phosphate + CoA. It catalyses the reaction 1-hexadecanoyl-sn-glycero-3-phosphate + (5Z,8Z,11Z,14Z)-eicosatetraenoyl-CoA = 1-hexadecanoyl-2-(5Z,8Z,11Z,14Z-eicosatetraenoyl)-sn-glycero-3-phosphate + CoA. The catalysed reaction is 1-heptadecanoyl-sn-glycero-3-phosphate + (5Z,8Z,11Z,14Z)-eicosatetraenoyl-CoA = 1-heptadecanoyl-2-(5Z,8Z,11Z,14Z)-eicosatetraenoyl-sn-glycero-3-phosphate + CoA. The enzyme catalyses 1-octadecanoyl-sn-glycero-3-phosphate + (9Z)-octadecenoyl-CoA = 1-octadecanoyl-2-(9Z-octadecenoyl)-sn-glycero-3-phosphate + CoA. It carries out the reaction 1-octadecanoyl-sn-glycero-3-phosphate + (5Z,8Z,11Z,14Z)-eicosatetraenoyl-CoA = 1-octadecanoyl-2-(5Z,8Z,11Z,14Z-eicosatetraenoyl)-sn-glycero-3-phosphate + CoA. It catalyses the reaction 1-(9Z-octadecenoyl)-sn-glycero-3-phosphate + hexadecanoyl-CoA = 1-hexadecanoyl-2-(9Z-octadecenoyl)-sn-glycero-3-phosphate + CoA. The catalysed reaction is 1-O-(9Z-octadecenyl)-sn-glycero-3-phosphate + (5Z,8Z,11Z,14Z)-eicosatetraenoyl-CoA = 1-O-(9Z-octadecenyl)-2-(5Z,8Z,11Z,14Z-eicosatetraenoyl)-sn-glycero-3-phosphate + CoA. The enzyme catalyses a 1-acyl-sn-glycero-3-phospho-(1D-myo-inositol) + (5Z,8Z,11Z,14Z)-eicosatetraenoyl-CoA = a 1-acyl-2-(5Z,8Z,11Z,14Z-eicosatetraenoyl)-sn-glycero-3-phospho-(1D-myo-inositol) + CoA. The protein operates within phospholipid metabolism; CDP-diacylglycerol biosynthesis; CDP-diacylglycerol from sn-glycerol 3-phosphate: step 2/3. Functionally, converts 1-acyl-sn-glycerol-3-phosphate (lysophosphatidic acid or LPA) into 1,2-diacyl-sn-glycerol-3-phosphate (phosphatidic acid or PA) by incorporating an acyl moiety at the sn-2 position of the glycerol backbone. Acts on LPA containing saturated or unsaturated fatty acids C16:0-C20:4 at the sn-1 position using C18:1, C20:4 or C18:2-CoA as the acyl donor. Also acts on lysophosphatidylcholine, lysophosphatidylinositol and lysophosphatidylserine using C18:1 or C20:4-CoA. Has a preference for arachidonoyl-CoA as a donor. Also has a modest lysophosphatidylinositol acyltransferase (LPIAT) activity, converts lysophosphatidylinositol (LPI) into phosphatidylinositol. The protein is 1-acyl-sn-glycerol-3-phosphate acyltransferase gamma (AGPAT3) of Pongo abelii (Sumatran orangutan).